Here is a 199-residue protein sequence, read N- to C-terminus: Shikimate kinase (199 aa).

Residue 14–19 (GSGKST) coordinates ATP. S18 lines the Mg(2+) pocket. Substrate is bound by residues D36, R60, and G82. Residue R120 participates in ATP binding. R147 provides a ligand contact to substrate.

Belongs to the shikimate kinase family. As to quaternary structure, monomer. The cofactor is Mg(2+).

The protein localises to the cytoplasm. It carries out the reaction shikimate + ATP = 3-phosphoshikimate + ADP + H(+). It functions in the pathway metabolic intermediate biosynthesis; chorismate biosynthesis; chorismate from D-erythrose 4-phosphate and phosphoenolpyruvate: step 5/7. Functionally, catalyzes the specific phosphorylation of the 3-hydroxyl group of shikimic acid using ATP as a cosubstrate. The protein is Shikimate kinase of Chlorobium limicola (strain DSM 245 / NBRC 103803 / 6330).